The following is a 21-amino-acid chain: Histone H2B 1 (21 aa).

The interval 1–21 is disordered; sequence MPDPAKTAPKKGSKKAVTKXA. Lys-6 and Lys-11 each carry N6-acetyllysine. Over residues 8-21 the composition is skewed to basic residues; sequence APKKGSKKAVTKXA. Ser-13 is subject to Phosphoserine. 2 positions are modified to N6-acetyllysine: Lys-14 and Lys-19. Residue Lys-19 forms a Glycyl lysine isopeptide (Lys-Gly) (interchain with G-Cter in ubiquitin) linkage.

It belongs to the histone H2B family. In terms of assembly, the nucleosome is a histone octamer containing two molecules each of H2A, H2B, H3 and H4 assembled in one H3-H4 heterotetramer and two H2A-H2B heterodimers. The octamer wraps approximately 147 bp of DNA. Post-translationally, monoubiquitination at the C-terminal Lys gives a specific tag for epigenetic transcriptional activation and is also prerequisite for histone H3 'Lys-4' and 'Lys-79' methylation. Phosphorylated during apoptosis; which facilitates apoptotic chromatin condensation.

It localises to the nucleus. It is found in the chromosome. Its function is as follows. Core component of nucleosome. Nucleosomes wrap and compact DNA into chromatin, limiting DNA accessibility to the cellular machineries which require DNA as a template. Histones thereby play a central role in transcription regulation, DNA repair, DNA replication and chromosomal stability. DNA accessibility is regulated via a complex set of post-translational modifications of histones, also called histone code, and nucleosome remodeling. Has broad-spectrum antimicrobial and antibacterial activity. It is important in the antimicrobial defenses of fish skin and possesses strong activity against saprolegnia, the most common fungal infection in fish. It is also inhibitory to fish bacterial pathogens, such as aeromonas hydrophila, vibrio alginolyticus and E.coli D31. The chain is Histone H2B 1 from Ictalurus punctatus (Channel catfish).